A 269-amino-acid polypeptide reads, in one-letter code: Protein OPG079 (269 aa).

It belongs to the orthopoxvirus OPG079 family. Homoomultimer (Potential). Interacts with the small subunit of ribonucleotide reductase. Interacts with host FAM111A; this interaction protomtes OPG079 degradation through autophagy.

Its subcellular location is the host cytoplasm. Functionally, plays an essential role in viral DNA replication. Binds to ssDNA with high affinity and localizes to cytoplasmic factories where nascent viral genomes accumulate. May disrupt loops, hairpins and other secondary structures present on ssDNA to reduce and eliminate pausing of viral DNA polymerase at specific sites during elongation. This is Protein OPG079 (OPG079) from Vaccinia virus (strain Copenhagen) (VACV).